The primary structure comprises 253 residues: Cyclin-C1-1 (253 aa).

Belongs to the cyclin family. Cyclin C subfamily.

The polypeptide is Cyclin-C1-1 (CYCC1-1) (Arabidopsis thaliana (Mouse-ear cress)).